The primary structure comprises 270 residues: UPF0354 protein BCA_4815 (270 aa).

It belongs to the UPF0354 family.

This is UPF0354 protein BCA_4815 from Bacillus cereus (strain 03BB102).